The chain runs to 259 residues: MMISGLRSSFSFFTLVPSRQKDIGNPITFLPLVVTVGALIGDSILYITWQFSHLIASFLSISSIIIYNGLNHFDATADLGDALMVRDKSRIPEVIKDHHVGAGGIFAVIFVYGIAVLSLARSTLYIGLVGILIGQVVSGSSMMISLIGSQPFVPGLADYFISLFRKHSVGYTIEFLAIPIIVSFIFSPLYVVIVALNLLIVQLTKTMISRRFGGINGDVIGFLGEFSRSLFIFMLIIIAHYNVASTYDIFSKMLSSFTS.

6 helical membrane passes run 27 to 47 (ITFLPLVVTVGALIGDSILYI), 51 to 71 (FSHLIASFLSISSIIIYNGLN), 100 to 120 (VGAGGIFAVIFVYGIAVLSLA), 124 to 144 (LYIGLVGILIGQVVSGSSMMI), 175 to 195 (FLAIPIIVSFIFSPLYVVIVA), and 219 to 239 (VIGFLGEFSRSLFIFMLIIIA).

This sequence belongs to the CobS family. Mg(2+) serves as cofactor.

The protein localises to the cell membrane. It catalyses the reaction alpha-ribazole + adenosylcob(III)inamide-GDP = adenosylcob(III)alamin + GMP + H(+). The catalysed reaction is alpha-ribazole 5'-phosphate + adenosylcob(III)inamide-GDP = adenosylcob(III)alamin 5'-phosphate + GMP + H(+). It functions in the pathway cofactor biosynthesis; adenosylcobalamin biosynthesis; adenosylcobalamin from cob(II)yrinate a,c-diamide: step 7/7. Functionally, joins adenosylcobinamide-GDP and alpha-ribazole to generate adenosylcobalamin (Ado-cobalamin). Also synthesizes adenosylcobalamin 5'-phosphate from adenosylcobinamide-GDP and alpha-ribazole 5'-phosphate. This is Adenosylcobinamide-GDP ribazoletransferase from Thermoplasma volcanium (strain ATCC 51530 / DSM 4299 / JCM 9571 / NBRC 15438 / GSS1).